Reading from the N-terminus, the 281-residue chain is 2-dehydro-3-deoxyphosphooctonate aldolase (281 aa).

The protein belongs to the KdsA family.

Its subcellular location is the cytoplasm. It carries out the reaction D-arabinose 5-phosphate + phosphoenolpyruvate + H2O = 3-deoxy-alpha-D-manno-2-octulosonate-8-phosphate + phosphate. It functions in the pathway carbohydrate biosynthesis; 3-deoxy-D-manno-octulosonate biosynthesis; 3-deoxy-D-manno-octulosonate from D-ribulose 5-phosphate: step 2/3. Its pathway is bacterial outer membrane biogenesis; lipopolysaccharide biosynthesis. This is 2-dehydro-3-deoxyphosphooctonate aldolase from Stutzerimonas stutzeri (strain A1501) (Pseudomonas stutzeri).